The sequence spans 236 residues: MTSEKGPSTGDPTLRRRIESWEFDVFYDPRELRKETCLLYEIKWGMSRKIWRSSGKNTTNHVEVNFIKKFTSERRFHSSISCSITWFLSWSPCWECSQAIREFLSQHPGVTLVIYVARLFWHMDQRNRQGLRDLVNSGVTIQIMRASEYYHCWRNFVNYPPGDEAHWPQYPPLWMMLYALELHCIILSLPPCLKISRRWQNHLAFFRLHLQNCHYQTIPPHILLATGLIHPSVTWR.

Residues 10–134 (GDPTLRRRIE…QRNRQGLRDL (125 aa)) enclose the CMP/dCMP-type deaminase domain. A Zn(2+)-binding site is contributed by His-61. Glu-63 serves as the catalytic Proton donor. The Zn(2+) site is built by Cys-93 and Cys-96.

This sequence belongs to the cytidine and deoxycytidylate deaminase family. In terms of assembly, homodimer. Interacts with A1CF; form an mRNA editing complex. Interacts with RBM47; form an mRNA editing complex. Found in a complex with CELF2/CUGBP2 and A1CF. Interacts with HNRPAB. Interacts with SYNCRIP. Requires Zn(2+) as cofactor.

The protein localises to the cytoplasm. The protein resides in the nucleus. It carries out the reaction a cytidine in mRNA + H2O + H(+) = a uridine in mRNA + NH4(+). It catalyses the reaction cytidine(6666) in apoB mRNA + H2O + H(+) = uridine(6666) in apoB mRNA + NH4(+). Its function is as follows. Cytidine deaminase catalyzing the cytidine to uridine postranscriptional editing of a variety of mRNAs. Form complexes with cofactors that confer differential editing activity and selectivity. Responsible for the postranscriptional editing of a CAA codon for Gln to a UAA codon for stop in the apolipoprotein B mRNA. Also involved in CGA (Arg) to UGA (Stop) editing in the NF1 mRNA. May also play a role in the epigenetic regulation of gene expression by participating in DNA demethylation. The sequence is that of C-&gt;U-editing enzyme APOBEC-1 from Pongo pygmaeus (Bornean orangutan).